A 365-amino-acid chain; its full sequence is Class I histocompatibility antigen, Gogo-C*0101/C*0102 alpha chain (365 aa).

Residues Met-1–Ala-24 form the signal peptide. The interval Gly-25 to Asp-114 is alpha-1. Over Gly-25–Ile-308 the chain is Extracellular. The N-linked (GlcNAc...) asparagine glycan is linked to Asn-110. The tract at residues Gly-115 to Ala-206 is alpha-2. 2 cysteine pairs are disulfide-bonded: Cys-125-Cys-188 and Cys-227-Cys-283. The alpha-3 stretch occupies residues Asp-207–Trp-298. In terms of domain architecture, Ig-like C1-type spans Pro-209–Arg-297. The connecting peptide stretch occupies residues Glu-299–Ile-308. Residues Val-309–Cys-332 traverse the membrane as a helical segment. Topologically, residues Arg-333 to Ala-365 are cytoplasmic. A phosphoserine mark is found at Ser-356 and Ser-359.

This sequence belongs to the MHC class I family. In terms of assembly, heterodimer of an alpha chain and a beta chain (beta-2-microglobulin).

Its subcellular location is the membrane. In terms of biological role, involved in the presentation of foreign antigens to the immune system. The chain is Class I histocompatibility antigen, Gogo-C*0101/C*0102 alpha chain from Gorilla gorilla gorilla (Western lowland gorilla).